A 214-amino-acid polypeptide reads, in one-letter code: ATP-dependent Clp protease proteolytic subunit (214 aa).

Serine 106 (nucleophile) is an active-site residue. Histidine 131 is an active-site residue.

The protein belongs to the peptidase S14 family. Fourteen ClpP subunits assemble into 2 heptameric rings which stack back to back to give a disk-like structure with a central cavity, resembling the structure of eukaryotic proteasomes.

The protein localises to the cytoplasm. It catalyses the reaction Hydrolysis of proteins to small peptides in the presence of ATP and magnesium. alpha-casein is the usual test substrate. In the absence of ATP, only oligopeptides shorter than five residues are hydrolyzed (such as succinyl-Leu-Tyr-|-NHMec, and Leu-Tyr-Leu-|-Tyr-Trp, in which cleavage of the -Tyr-|-Leu- and -Tyr-|-Trp bonds also occurs).. In terms of biological role, cleaves peptides in various proteins in a process that requires ATP hydrolysis. Has a chymotrypsin-like activity. Plays a major role in the degradation of misfolded proteins. This chain is ATP-dependent Clp protease proteolytic subunit, found in Rhodopseudomonas palustris (strain BisB5).